The chain runs to 359 residues: MMLILIAVGIALAVSILLTPALIRLFTKQGLGHEIREDGPPSHAKKRGTPSMGGVAILAGIWAGYLGSHLVGMAMGGDGPSASGLLVLGLATVLGGVGFIDDMIKLKRARNLGLNKTAKTVGQLFAAVLFGVLALQFRNGDGLTPGSAELSYVREIATVTLAPALFVLFCVVVVSAWSNAVNFTDGLDGLAAGAMAMVTAAYVLITFWQYRNACATAPGLGCYNVRDPLDLALVAAATAGACVGFLWWNAAPAKIFMGDTGSLALGGIIAGISVTSRTEILAVVLGALFVAEVTSVVVQILAFRTTGRRVFRMAPFHHHFELVGWAETQVIIRFWLLTAIACGLGVALFYGEWLTAVGA.

Transmembrane regions (helical) follow at residues 3-23 (LILIAVGIALAVSILLTPALI), 55-75 (VAILAGIWAGYLGSHLVGMAM), 80-100 (PSASGLLVLGLATVLGGVGFI), 117-137 (TAKTVGQLFAAVLFGVLALQF), 156-176 (IATVTLAPALFVLFCVVVVSA), 187-207 (LDGLAAGAMAMVTAAYVLITF), 231-251 (LALVAAATAGACVGFLWWNAA), 255-275 (IFMGDTGSLALGGIIAGISVT), 280-300 (ILAVVLGALFVAEVTSVVVQI), and 334-354 (FWLLTAIACGLGVALFYGEWL).

This sequence belongs to the glycosyltransferase 4 family. MraY subfamily. Mg(2+) serves as cofactor.

Its subcellular location is the cell membrane. The catalysed reaction is UDP-N-acetyl-alpha-D-muramoyl-L-alanyl-gamma-D-glutamyl-meso-2,6-diaminopimeloyl-D-alanyl-D-alanine + di-trans,octa-cis-undecaprenyl phosphate = di-trans,octa-cis-undecaprenyl diphospho-N-acetyl-alpha-D-muramoyl-L-alanyl-D-glutamyl-meso-2,6-diaminopimeloyl-D-alanyl-D-alanine + UMP. The protein operates within cell wall biogenesis; peptidoglycan biosynthesis. Functionally, catalyzes the initial step of the lipid cycle reactions in the biosynthesis of the cell wall peptidoglycan: transfers peptidoglycan precursor phospho-MurNAc-pentapeptide from UDP-MurNAc-pentapeptide onto the lipid carrier undecaprenyl phosphate, yielding undecaprenyl-pyrophosphoryl-MurNAc-pentapeptide, known as lipid I. The polypeptide is Phospho-N-acetylmuramoyl-pentapeptide-transferase (Mycolicibacterium smegmatis (strain ATCC 700084 / mc(2)155) (Mycobacterium smegmatis)).